Reading from the N-terminus, the 443-residue chain is MRLSRYFLPVMKETPADAQIISHKLMLRAGMIRQTAAGIYAWLPLGLRVLRRIEKIIREEQARAGALELLMPTLQTADLWRESGRYDAYGPEMLRIKDRHNRELLYGPTNEEMITALIRDNLQSYRDLPRIFYHIQWKFRDEVRPRFGVMRGREFLMKDAYSFDIDETAGRHNYNRMFVAYLNSFSRLGLRAIPMQADTGPIGGDLSHEFIVLAPNGESDVFYHSNWEQPTRHIEADFDDPKALQSIVNDHISDYAATDEKRDPLREAQAGDKLRQSRGIEVGHIFFFGTKYSKPMGFTLPGPDGKPIPIQMGSYGIGISRLLGAIIEASHDDNGIIWPEAVAPYHVGLINLRIDDENCRAIADSLYQRLEAAGIDTLYDDRNERGGAKFATMDLIGLPWQVVIGPKGAEKGVVELKNRANGEKQTISVENAFNLLTAGHQQR.

It belongs to the class-II aminoacyl-tRNA synthetase family. ProS type 2 subfamily. Homodimer.

Its subcellular location is the cytoplasm. It carries out the reaction tRNA(Pro) + L-proline + ATP = L-prolyl-tRNA(Pro) + AMP + diphosphate. In terms of biological role, catalyzes the attachment of proline to tRNA(Pro) in a two-step reaction: proline is first activated by ATP to form Pro-AMP and then transferred to the acceptor end of tRNA(Pro). The polypeptide is Proline--tRNA ligase (Zymomonas mobilis subsp. mobilis (strain ATCC 31821 / ZM4 / CP4)).